The sequence spans 199 residues: 5'-deoxynucleotidase YfbR (199 aa).

Residues 18 to 19 (RW) and His-33 each bind substrate. The 113-residue stretch at 30 to 142 (VSEHSLQVAM…VKQADALCAY (113 aa)) folds into the HD domain. The a divalent metal cation site is built by His-33, His-68, and Asp-69. Residues Asp-69, 77–80 (DLPT), and Asp-137 contribute to the substrate site. Asp-137 is an a divalent metal cation binding site.

It belongs to the 5DNU family. As to quaternary structure, homodimer. A divalent metal cation is required as a cofactor.

Its subcellular location is the cytoplasm. It carries out the reaction a 2'-deoxyribonucleoside 5'-phosphate + H2O = a 2'-deoxyribonucleoside + phosphate. Catalyzes the strictly specific dephosphorylation of 2'-deoxyribonucleoside 5'-monophosphates. The chain is 5'-deoxynucleotidase YfbR from Escherichia coli (strain K12 / MC4100 / BW2952).